The sequence spans 372 residues: Biglycan (372 aa).

The signal sequence occupies residues M1–A19. Residues L20 to N40 constitute a propeptide that is removed on maturation. O-linked (Xyl...) (glycosaminoglycan) serine glycosylation is found at S45 and S51. 2 disulfides stabilise this stretch: C67/C73 and C71/C80. 12 LRR repeats span residues K86–I106, S107–I130, S131–L154, V155–I175, R176–L199, E200–L224, T225–I245, Q246–I269, R270–L293, S294–I316, T317–V346, and P347–K372. Residues N274 and N315 are each glycosylated (N-linked (GlcNAc...) asparagine). C325 and C358 are oxidised to a cystine.

It belongs to the small leucine-rich proteoglycan (SLRP) family. SLRP class I subfamily. In terms of assembly, homodimer. Forms a ternary complex with MFAP2 and ELN. In terms of processing, the two attached glycosaminoglycan chains can be either chondroitin sulfate or dermatan sulfate.

The protein resides in the secreted. The protein localises to the extracellular space. It localises to the extracellular matrix. Its function is as follows. May be involved in collagen fiber assembly. This Equus caballus (Horse) protein is Biglycan (BGN).